The chain runs to 381 residues: MSLNMFWFLPTHGDGHYLGTEEGSRPVDHGYLQQIAQAADRLGYTGVLIPTGRSCEDAWLVAASMIPVTQRLKFLVALRPSVTSPTVAARQAATLDRLSNGRALFNLVTGSDPQELAGDGVFLDHSERYEASAEFTQVWRRLLLGETVNFNGKHSHVRGAKLLFPPIQQPYPPLYFGGSSDVAQELAAEQVDLYLTWGEPPELVKEKIEQVRAKAAAYGRKIRFGIRLHVIVRETNDEAWQAAERLISHLDDETIAKAQAAFARTDSVGQQRMAALHNGKRDNLEISPNLWAGVGLVRGGAGTALVGDGPTVAARINEYAALGIDSFVLSGYPHLEEAYRVGELLFPHLDVAIPEIPQPQPLNPQGEAVANDFIPRKVAQS.

Belongs to the SsuD family. As to quaternary structure, homotetramer.

The enzyme catalyses an alkanesulfonate + FMNH2 + O2 = an aldehyde + FMN + sulfite + H2O + 2 H(+). In terms of biological role, catalyzes the desulfonation of aliphatic sulfonates. The polypeptide is Alkanesulfonate monooxygenase (Shigella flexneri serotype 5b (strain 8401)).